A 682-amino-acid polypeptide reads, in one-letter code: Methionine--tRNA ligase (682 aa).

The 'HIGH' region signature appears at 15–25 (PYANGAIHLGH). Residues Cys-146, Cys-149, Cys-159, and Cys-162 each coordinate Zn(2+). The 'KMSKS' region motif lies at 331–335 (KMSKS). Lys-334 contacts ATP. A tRNA-binding domain is found at 580–682 (DFAKLDMRVA…SGVTAGMQVK (103 aa)).

Belongs to the class-I aminoacyl-tRNA synthetase family. MetG type 1 subfamily. Homodimer. Zn(2+) is required as a cofactor.

It localises to the cytoplasm. It carries out the reaction tRNA(Met) + L-methionine + ATP = L-methionyl-tRNA(Met) + AMP + diphosphate. In terms of biological role, is required not only for elongation of protein synthesis but also for the initiation of all mRNA translation through initiator tRNA(fMet) aminoacylation. This is Methionine--tRNA ligase from Haemophilus influenzae (strain PittEE).